A 284-amino-acid polypeptide reads, in one-letter code: ATP synthase subunit a (284 aa).

The next 5 membrane-spanning stretches (helical) occupy residues 47–67, 108–128, 156–176, 233–253, and 254–274; these read AFHL…LIFF, VAPL…MDLV, VPTA…ILII, MIFI…SLPW, and AIFH…LVIV.

Belongs to the ATPase A chain family. In terms of assembly, F-type ATPases have 2 components, CF(1) - the catalytic core - and CF(0) - the membrane proton channel. CF(1) has five subunits: alpha(3), beta(3), gamma(1), delta(1), epsilon(1). CF(0) has three main subunits: a(1), b(2) and c(9-12). The alpha and beta chains form an alternating ring which encloses part of the gamma chain. CF(1) is attached to CF(0) by a central stalk formed by the gamma and epsilon chains, while a peripheral stalk is formed by the delta and b chains.

It is found in the cell inner membrane. In terms of biological role, key component of the proton channel; it plays a direct role in the translocation of protons across the membrane. The polypeptide is ATP synthase subunit a (Ruthia magnifica subsp. Calyptogena magnifica).